The following is a 320-amino-acid chain: Cytochrome f (320 aa).

Positions 1–35 (MQTRNTFSWIREEITRSISVLLMIYIITWASISSA) are cleaved as a signal peptide. Residues tyrosine 36, cysteine 56, cysteine 59, and histidine 60 each coordinate heme. A helical transmembrane segment spans residues 286 to 306 (VQGLLFFLGSVVLAQIFLVLK).

The protein belongs to the cytochrome f family. In terms of assembly, the 4 large subunits of the cytochrome b6-f complex are cytochrome b6, subunit IV (17 kDa polypeptide, petD), cytochrome f and the Rieske protein, while the 4 small subunits are PetG, PetL, PetM and PetN. The complex functions as a dimer. The cofactor is heme.

It localises to the plastid. It is found in the chloroplast thylakoid membrane. In terms of biological role, component of the cytochrome b6-f complex, which mediates electron transfer between photosystem II (PSII) and photosystem I (PSI), cyclic electron flow around PSI, and state transitions. This chain is Cytochrome f, found in Lobularia maritima (Sweet alyssum).